The following is a 150-amino-acid chain: Putative ribosome maturation factor RimP (150 aa).

It belongs to the RimP family.

The protein localises to the cytoplasm. Its function is as follows. Required for maturation of 30S ribosomal subunits. The sequence is that of Putative ribosome maturation factor RimP from Mycobacterium leprae (strain TN).